The chain runs to 223 residues: Neurotrophic factor BDNF precursor form (223 aa).

The signal sequence occupies residues 1–5 (SCMKA). The propeptide occupies 6 to 114 (APMKEVSLRG…AANMSMRVRR (109 aa)). The N-linked (GlcNAc...) asparagine glycan is linked to N107. 2 disulfide bridges follow: C127/C194 and C172/C223.

Belongs to the NGF-beta family.

Its subcellular location is the secreted. Functionally, promotes the survival of neuronal populations that are all located either in the central nervous system or directly connected to it. The chain is Neurotrophic factor BDNF precursor form (BDNF) from Ramphotyphlops sp. (strain YPM 13663) (Blind snake).